We begin with the raw amino-acid sequence, 356 residues long: Arginine kinase (356 aa).

The 83-residue stretch at K9–I91 folds into the Phosphagen kinase N-terminal domain. G64–Y68 is an L-arginine binding site. One can recognise a Phosphagen kinase C-terminal domain in the interval F119–A356. Residues S122–R126 and H185 each bind ATP. E225 lines the L-arginine pocket. R229 is a binding site for ATP. An L-arginine-binding site is contributed by C271. ATP contacts are provided by residues R280–H284 and R309–E314. Position 314 (E314) interacts with L-arginine.

The protein belongs to the ATP:guanido phosphotransferase family.

The catalysed reaction is L-arginine + ATP = N(omega)-phospho-L-arginine + ADP + H(+). The chain is Arginine kinase (ARGK) from Artemia franciscana (Brine shrimp).